Consider the following 310-residue polypeptide: NADP-dependent D-sorbitol-6-phosphate dehydrogenase (310 aa).

Y48 serves as the catalytic Proton donor. H108 serves as a coordination point for substrate. T210 to N272 contacts NADP(+).

Belongs to the aldo/keto reductase family.

It catalyses the reaction D-sorbitol 6-phosphate + NADP(+) = aldehydo-D-glucose 6-phosphate + NADPH + H(+). Synthesizes sorbitol-6-phosphate, a key intermediate in the synthesis of sorbitol which is a major photosynthetic product in many members of the Rosaceae family. The protein is NADP-dependent D-sorbitol-6-phosphate dehydrogenase (S6PDH) of Malus domestica (Apple).